The primary structure comprises 288 residues: Quinate/shikimate dehydrogenase (288 aa).

Lysine 71 and aspartate 107 together coordinate substrate. NAD(+)-binding positions include 132–135 (AGGA), 155–158 (NRRD), lysine 205, 232–235 (CVYN), and glycine 255.

Belongs to the shikimate dehydrogenase family. In terms of assembly, homodimer.

It catalyses the reaction L-quinate + NAD(+) = 3-dehydroquinate + NADH + H(+). It carries out the reaction L-quinate + NADP(+) = 3-dehydroquinate + NADPH + H(+). The enzyme catalyses shikimate + NADP(+) = 3-dehydroshikimate + NADPH + H(+). The catalysed reaction is shikimate + NAD(+) = 3-dehydroshikimate + NADH + H(+). The protein operates within metabolic intermediate biosynthesis; chorismate biosynthesis; chorismate from D-erythrose 4-phosphate and phosphoenolpyruvate: step 4/7. The actual biological function of YdiB remains unclear, nor is it known whether 3-dehydroshikimate or quinate represents the natural substrate. Catalyzes the reversible NAD-dependent reduction of both 3-dehydroshikimate (DHSA) and 3-dehydroquinate to yield shikimate (SA) and quinate, respectively. It can use both NAD or NADP for catalysis, however it has higher catalytic efficiency with NAD. This chain is Quinate/shikimate dehydrogenase, found in Shigella flexneri.